We begin with the raw amino-acid sequence, 298 residues long: ATP synthase gamma chain (298 aa).

It belongs to the ATPase gamma chain family. F-type ATPases have 2 components, CF(1) - the catalytic core - and CF(0) - the membrane proton channel. CF(1) has five subunits: alpha(3), beta(3), gamma(1), delta(1), epsilon(1). CF(0) has three main subunits: a, b and c.

It localises to the cell inner membrane. Its function is as follows. Produces ATP from ADP in the presence of a proton gradient across the membrane. The gamma chain is believed to be important in regulating ATPase activity and the flow of protons through the CF(0) complex. This chain is ATP synthase gamma chain, found in Wolinella succinogenes (strain ATCC 29543 / DSM 1740 / CCUG 13145 / JCM 31913 / LMG 7466 / NCTC 11488 / FDC 602W) (Vibrio succinogenes).